Reading from the N-terminus, the 267-residue chain is Dolichol-phosphate mannosyltransferase (267 aa).

Ser-2 carries the N-acetylserine modification. Over 2–238 (SIEYSVIVPA…QQLKELYVFK (237 aa)) the chain is Cytoplasmic. Positions 10, 12, 14, 42, 44, 95, 96, 97, 99, and 122 each coordinate GDP-alpha-D-mannose. The Mg(2+) site is built by Asp-97 and Gln-99. Mn(2+)-binding residues include Asp-97 and Gln-99. A Phosphoserine; by PKA modification is found at Ser-141. Residues Lys-183, Arg-212, and Lys-218 each coordinate GDP-alpha-D-mannose. A helical; Anchor for type IV membrane protein transmembrane segment spans residues 239–259 (FGANNLILFITFWSILFFYVC). Over 260–267 (YQLYHLVF) the chain is Lumenal.

It belongs to the glycosyltransferase 2 family. Interacts with the C-terminus of SAC1, thereby sequestering it to the endoplasmic reticulum in exponentially growing cells. Under nutrient limitation conditions, this interaction is rapidly abolished. It depends on Mg(2+) as a cofactor. Mn(2+) is required as a cofactor. Requires Ca(2+) as cofactor.

Its subcellular location is the endoplasmic reticulum membrane. The catalysed reaction is a di-trans,poly-cis-dolichyl phosphate + GDP-alpha-D-mannose = a di-trans,poly-cis-dolichyl beta-D-mannosyl phosphate + GDP. It functions in the pathway protein modification; protein glycosylation. Its activity is regulated as follows. Inhibited by acetylsalicylic acid (aspirin). In terms of biological role, transfers mannose from GDP-mannose to dolichol monophosphate to form dolichol phosphate mannose (Dol-P-Man) which is the mannosyl donor in pathways leading to N-glycosylation, glycosyl phosphatidylinositol membrane anchoring, and O-mannosylation of proteins. The polypeptide is Dolichol-phosphate mannosyltransferase (Saccharomyces cerevisiae (strain ATCC 204508 / S288c) (Baker's yeast)).